Here is a 342-residue protein sequence, read N- to C-terminus: Autoinducer 2 import system permease protein LsrC (342 aa).

Over Met-1–Ala-13 the chain is Periplasmic. The chain crosses the membrane as a helical span at residues Leu-14–Val-34. Residues Gln-35–Thr-38 lie on the Cytoplasmic side of the membrane. Residues Met-39–Leu-59 traverse the membrane as a helical segment. At Thr-60–Ser-69 the chain is on the periplasmic side. The chain crosses the membrane as a helical span at residues Ile-70 to Val-90. The Cytoplasmic portion of the chain corresponds to Ala-91 to Cys-92. The helical transmembrane segment at Val-93–Leu-113 threads the bilayer. A topological domain (periplasmic) is located at residue Lys-114. The chain crosses the membrane as a helical span at residues Ile-115–Trp-135. Over Thr-136–Pro-154 the chain is Cytoplasmic. Residues Leu-155–Trp-175 form a helical membrane-spanning segment. Topologically, residues Leu-176 to Ser-212 are periplasmic. The helical transmembrane segment at Leu-213–Pro-233 threads the bilayer. The Cytoplasmic portion of the chain corresponds to Asn-234 to Gly-251. Residues Gly-252–Leu-272 form a helical membrane-spanning segment. At Thr-273–Arg-283 the chain is on the periplasmic side. Residues Ile-284–Asp-304 traverse the membrane as a helical segment. The Cytoplasmic portion of the chain corresponds to Gly-305–Ala-342.

It belongs to the binding-protein-dependent transport system permease family. AraH/RbsC subfamily. The complex is composed of two ATP-binding proteins (LsrA), two transmembrane proteins (LsrC and LsrD) and a solute-binding protein (LsrB).

It localises to the cell inner membrane. Part of the ABC transporter complex LsrABCD involved in autoinducer 2 (AI-2) import. Probably responsible for the translocation of the substrate across the membrane. This chain is Autoinducer 2 import system permease protein LsrC (lsrC), found in Escherichia coli O9:H4 (strain HS).